We begin with the raw amino-acid sequence, 131 residues long: MTTKRKPYVRPMTSTWWKKLPFYRFYMLREGTAVPAVWFSIELIFGLFALKNGPEAWAGFVDFLQNPVIVIINLITLAAALLHTKTWFELAPKAANIIVKDEKIGPEPIIKSLWAVTVVATIVILFVALYW.

Helical transmembrane passes span 30 to 50 (EGTAVPAVWFSIELIFGLFAL), 63 to 83 (FLQNPVIVIINLITLAAALLH), and 109 to 129 (IIKSLWAVTVVATIVILFVAL).

Belongs to the FrdC family. As to quaternary structure, part of an enzyme complex containing four subunits: a flavoprotein (FrdA), an iron-sulfur protein (FrdB), and two hydrophobic anchor proteins (FrdC and FrdD).

The protein resides in the cell inner membrane. In terms of biological role, two distinct, membrane-bound, FAD-containing enzymes are responsible for the catalysis of fumarate and succinate interconversion; fumarate reductase is used in anaerobic growth, and succinate dehydrogenase is used in aerobic growth. Anchors the catalytic components of the fumarate reductase complex to the cell inner membrane, binds quinones. This Shigella dysenteriae serotype 1 (strain Sd197) protein is Fumarate reductase subunit C.